The following is a 252-amino-acid chain: Large ribosomal subunit protein uL3 (252 aa).

Q169 is subject to N5-methylglutamine.

The protein belongs to the universal ribosomal protein uL3 family. Part of the 50S ribosomal subunit. Forms a cluster with proteins L14 and L19. In terms of processing, methylated by PrmB.

In terms of biological role, one of the primary rRNA binding proteins, it binds directly near the 3'-end of the 23S rRNA, where it nucleates assembly of the 50S subunit. In Hyphomonas neptunium (strain ATCC 15444), this protein is Large ribosomal subunit protein uL3.